The sequence spans 400 residues: Unsaturated glucuronyl hydrolase (400 aa).

An N-terminal signal peptide occupies residues 1-20 (MRKLVYLVLVLGLTFLNVRC). The active-site Nucleophile is aspartate 120. Aspartate 181 functions as the Proton donor in the catalytic mechanism.

Belongs to the glycosyl hydrolase 88 family.

Its subcellular location is the cell surface. Its function is as follows. Unsaturated glucuronyl hydrolase involved in ulvan degradation. Ulvan is the main polysaccharide component of the Ulvales (green seaweed) cell wall. It is composed of disaccharide building blocks comprising 3-sulfated rhamnose (Rha3S) linked to D-glucuronic acid (GlcA), L-iduronic acid (IduA), or D-xylose (Xyl). Unsaturated glucuronyl hydrolase catalyzes the cleavage of the unsaturated 4-deoxy-L-threo-hex-4-enopyranosiduronic acid (deltaUA) at the non-reducing end of ulvan oligomers, thus forming 5-dehydro-4-deoxy-D-glucuronate. The polypeptide is Unsaturated glucuronyl hydrolase (Formosa agariphila (strain DSM 15362 / KCTC 12365 / LMG 23005 / KMM 3901 / M-2Alg 35-1)).